The chain runs to 173 residues: Alpha-crystallin A chain (173 aa).

The residue at position 1 (Met-1) is an N-acetylmethionine. Residues 1–63 (MDITIQHPWF…RTVLESGISE (63 aa)) are required for complex formation with BFSP1 and BFSP2. Residue Gln-6 is modified to Deamidated glutamine; partial. Ser-45 is subject to Phosphoserine. Gln-50 bears the Deamidated glutamine; partial mark. A sHSP domain is found at 52-164 (LFRTVLESGI…SDRSIPVSRE (113 aa)). An N6-acetyllysine modification is found at Lys-99. The Zn(2+) site is built by His-100, Glu-102, and His-107. At Ser-122 the chain carries Phosphoserine. Asn-123 is subject to Deamidated asparagine; partial. The segment at 144 to 173 (PKIHSNMESSHSDRSIPVSREEKPTLAPSS) is disordered. Over residues 153–167 (SHSDRSIPVSREEKP) the composition is skewed to basic and acidic residues. Residue His-154 coordinates Zn(2+). Residue Ser-162 is glycosylated (O-linked (GlcNAc) serine).

Belongs to the small heat shock protein (HSP20) family. Heteromer composed of three CRYAA and one CRYAB subunits. Inter-subunit bridging via zinc ions enhances stability, which is crucial as there is no protein turn over in the lens. Can also form homodimers and homotetramers (dimers of dimers) which serve as the building blocks of homooligomers. Within homooligomers, the zinc-binding motif is created from residues of 3 different molecules. His-100 and Glu-102 from one molecule are ligands of the zinc ion, and His-107 and His-154 residues from additional molecules complete the site with tetrahedral coordination geometry. Part of a complex required for lens intermediate filament formation composed of BFSP1, BFSP2 and CRYAA. In terms of processing, acetylation at Lys-99 may increase chaperone activity. Undergoes age-dependent proteolytical cleavage at the C-terminus.

Its subcellular location is the cytoplasm. The protein localises to the nucleus. Its function is as follows. Contributes to the transparency and refractive index of the lens. Acts as a chaperone, preventing aggregation of various proteins under a wide range of stress conditions. Required for the correct formation of lens intermediate filaments as part of a complex composed of BFSP1, BFSP2 and CRYAA. The polypeptide is Alpha-crystallin A chain (CRYAA) (Didelphis virginiana (North American opossum)).